Consider the following 223-residue polypeptide: Membrane protein (223 aa).

Residues 1–18 (MAENCTLDSEQAVLLFKE) are Virion surface-facing. A helical membrane pass occupies residues 19-39 (YNLFITAFLLFLTILLQYGYA). Residues 40–49 (TRSRTIYILK) are Intravirion-facing. Residues 50–70 (MIVLWCFWPLNIAVGVISCIY) form a helical membrane-spanning segment. The Virion surface portion of the chain corresponds to 71-75 (PPNTG). Residues 76 to 96 (GLVAAIILTVFACLSFVGYWI) traverse the membrane as a helical segment. Residues 97–223 (QSCRLFKRCR…VATGGSSLYT (127 aa)) lie on the Intravirion side of the membrane.

This sequence belongs to the gammacoronaviruses M protein family. Homomultimer. Interacts with envelope E protein in the budding compartment of the host cell, which is located between endoplasmic reticulum and the Golgi complex. Forms a complex with HE and S proteins. Interacts with nucleocapsid N protein. This interaction probably participates in RNA packaging into the virus.

The protein localises to the virion membrane. It localises to the host Golgi apparatus membrane. In terms of biological role, component of the viral envelope that plays a central role in virus morphogenesis and assembly via its interactions with other viral proteins. The chain is Membrane protein from Gallus gallus (Chicken).